A 294-amino-acid polypeptide reads, in one-letter code: MEKILVTFSTGAASIAVLAVLFTVPSLYNTINEVHDQVLDGVSVFRVETDSAWTEMMDIQITVTPPTKPRVNPFNSVFRQKRQTFSGLPAWCQCEPTKPTCPPGPPGPPGQPGAPGTPGAPGPKGDDNTATFAPLTCAPVSQDCVKCPQGPAGPAGPSGPAGPAGPDGQPGFPGQRGNDGFPGAPGAPGDNGQPGTPGQDGFPGQPGADGQRGSGAPGAPGAPGNAGPAGPAGQDGFPGQDGAPGPAGPAGQDGFPGNAGSDGQPGAPGGPGLPGNDAAYCACPPRSAVFLSRH.

An N-terminal signal peptide occupies residues Met1–Thr30. Over residues Thr100–Pro112 the composition is skewed to pro residues. Disordered stretches follow at residues Thr100–Ala133 and Pro148–Asn276. Triple-helical region stretches follow at residues Pro102–Asp127 and Pro148–Asp277. Composition is skewed to low complexity over residues Ala164–Pro194 and Ala219–Pro265. The region spanning Gly218–Asn276 is the Collagen-like domain.

Belongs to the cuticular collagen family. In terms of assembly, collagen polypeptide chains are complexed within the cuticle by disulfide bonds and other types of covalent cross-links.

Functionally, nematode cuticles are composed largely of collagen-like proteins. The cuticle functions both as an exoskeleton and as a barrier to protect the worm from its environment. The polypeptide is Putative cuticle collagen 145 (col-145) (Caenorhabditis elegans).